Consider the following 126-residue polypeptide: Glycine cleavage system H protein (126 aa).

The region spanning 22 to 103 (KAYIGITDYA…PYGSWMALVE (82 aa)) is the Lipoyl-binding domain. Residue Lys63 is modified to N6-lipoyllysine.

It belongs to the GcvH family. As to quaternary structure, the glycine cleavage system is composed of four proteins: P, T, L and H. The cofactor is (R)-lipoate.

Functionally, the glycine cleavage system catalyzes the degradation of glycine. The H protein shuttles the methylamine group of glycine from the P protein to the T protein. This Thermoanaerobacter pseudethanolicus (strain ATCC 33223 / 39E) (Clostridium thermohydrosulfuricum) protein is Glycine cleavage system H protein.